A 73-amino-acid polypeptide reads, in one-letter code: Conotoxin CnIIIF (73 aa).

The first 19 residues, 1 to 19 (MSKLGVLLTICLLLFPLTA), serve as a signal peptide directing secretion. Residues 20-51 (LPMDGDQSVDRPAERMQDDISSGQHPLFNQKR) constitute a propeptide that is removed on maturation. 3 cysteine pairs are disulfide-bonded: Cys-53/Cys-72, Cys-54/Cys-70, and Cys-60/Cys-73.

Belongs to the conotoxin M superfamily. Expressed by the venom duct.

Its subcellular location is the secreted. Shows a paralytic effect in fish. The chain is Conotoxin CnIIIF from Conus consors (Singed cone).